The sequence spans 601 residues: Bifunctional protein GlmU (601 aa).

Positions 1–375 are pyrophosphorylase; it reads MKSDLAIVIL…SELLLGVNNR (375 aa). Residues 10-13, lysine 24, glutamine 75, and 81-82 each bind UDP-N-acetyl-alpha-D-glucosamine; these read LAAG and GT. Aspartate 165 contributes to the Mg(2+) binding site. UDP-N-acetyl-alpha-D-glucosamine-binding residues include glycine 201, glutamate 216, asparagine 230, and asparagine 373. Asparagine 373 provides a ligand contact to Mg(2+). Positions 376 to 396 are linker; that stretch reads VQLAKTEKILNDQIIKRWQLY. The N-acetyltransferase stretch occupies residues 397–601; the sequence is GVTIKSPETT…PKWAENRGDG (205 aa). UDP-N-acetyl-alpha-D-glucosamine-binding residues include arginine 478 and lysine 496. Histidine 508 acts as the Proton acceptor in catalysis. Residues tyrosine 511 and asparagine 522 each contribute to the UDP-N-acetyl-alpha-D-glucosamine site. Residues alanine 525, 531-532, and alanine 568 contribute to the acetyl-CoA site; that span reads NY.

The protein in the N-terminal section; belongs to the N-acetylglucosamine-1-phosphate uridyltransferase family. It in the C-terminal section; belongs to the transferase hexapeptide repeat family. Homotrimer. Mg(2+) serves as cofactor.

Its subcellular location is the cytoplasm. It carries out the reaction alpha-D-glucosamine 1-phosphate + acetyl-CoA = N-acetyl-alpha-D-glucosamine 1-phosphate + CoA + H(+). The enzyme catalyses N-acetyl-alpha-D-glucosamine 1-phosphate + UTP + H(+) = UDP-N-acetyl-alpha-D-glucosamine + diphosphate. The protein operates within nucleotide-sugar biosynthesis; UDP-N-acetyl-alpha-D-glucosamine biosynthesis; N-acetyl-alpha-D-glucosamine 1-phosphate from alpha-D-glucosamine 6-phosphate (route II): step 2/2. Its pathway is nucleotide-sugar biosynthesis; UDP-N-acetyl-alpha-D-glucosamine biosynthesis; UDP-N-acetyl-alpha-D-glucosamine from N-acetyl-alpha-D-glucosamine 1-phosphate: step 1/1. It participates in bacterial outer membrane biogenesis; LPS lipid A biosynthesis. Functionally, catalyzes the last two sequential reactions in the de novo biosynthetic pathway for UDP-N-acetylglucosamine (UDP-GlcNAc). The C-terminal domain catalyzes the transfer of acetyl group from acetyl coenzyme A to glucosamine-1-phosphate (GlcN-1-P) to produce N-acetylglucosamine-1-phosphate (GlcNAc-1-P), which is converted into UDP-GlcNAc by the transfer of uridine 5-monophosphate (from uridine 5-triphosphate), a reaction catalyzed by the N-terminal domain. This is Bifunctional protein GlmU from Tropheryma whipplei (strain TW08/27) (Whipple's bacillus).